We begin with the raw amino-acid sequence, 114 residues long: Immunomodulatory protein FIP-Fve (114 aa).

S1 carries the N-acetylserine modification.

The protein belongs to the fungal immunomodulatory protein (FIP) family. As to quaternary structure, homodimer.

Functionally, lectin with specificity for complex cell-surface carbohydrates. Possesses immunomodulatory activity, stimulates lymphocyte mitogenesis, suppresses systemic anaphylaxis reactions and edema, enhances transcription of IL-2, IFN-gamma and TNF-alpha and hemagglutinates red blood cells. In Flammulina velutipes (Agaricus velutipes), this protein is Immunomodulatory protein FIP-Fve.